A 386-amino-acid polypeptide reads, in one-letter code: Trichocyst matrix protein T2-B (386 aa).

The signal sequence occupies residues 1 to 19 (MKTIILALALIALVSSTQS). A propeptide spanning residues 20–48 (DVIDTIKKIDQSPFGRTLFDTIWLELQTG) is cleaved from the precursor. Residues 51 to 154 (LDRLVSTLTD…AEEHEDFEEK (104 aa)) are a coiled coil. The propeptide occupies 184 to 238 (KGKAAKQPHKFTKDVANLIQKHFTTSAKKTAKFQHRKGYSKLFKAFATIASKVEQ). Residues 294-325 (ALANAISDLAALNDIIAQVEASLDTTVQRIEN) adopt a coiled-coil conformation.

This sequence belongs to the TMP family.

The protein localises to the trichocyst. Structural protein that crystallize inside the trichocyst matrix. The sequence is that of Trichocyst matrix protein T2-B (T2B) from Paramecium tetraurelia.